Here is a 764-residue protein sequence, read N- to C-terminus: DNA polymerase 3 (764 aa).

It belongs to the DNA polymerase type-B family.

The enzyme catalyses DNA(n) + a 2'-deoxyribonucleoside 5'-triphosphate = DNA(n+1) + diphosphate. The polypeptide is DNA polymerase 3 (dpo3) (Saccharolobus solfataricus (strain ATCC 35092 / DSM 1617 / JCM 11322 / P2) (Sulfolobus solfataricus)).